Reading from the N-terminus, the 378-residue chain is 3-dehydroquinate synthase (378 aa).

Residues 111-115, 135-136, K148, and K157 contribute to the NAD(+) site; these read GVIGD and TS. Zn(2+) contacts are provided by E190, H252, and H271.

Belongs to the sugar phosphate cyclases superfamily. Dehydroquinate synthase family. It depends on NAD(+) as a cofactor. Co(2+) serves as cofactor. The cofactor is Zn(2+).

It is found in the cytoplasm. It carries out the reaction 7-phospho-2-dehydro-3-deoxy-D-arabino-heptonate = 3-dehydroquinate + phosphate. It participates in metabolic intermediate biosynthesis; chorismate biosynthesis; chorismate from D-erythrose 4-phosphate and phosphoenolpyruvate: step 2/7. Catalyzes the conversion of 3-deoxy-D-arabino-heptulosonate 7-phosphate (DAHP) to dehydroquinate (DHQ). In Mesorhizobium japonicum (strain LMG 29417 / CECT 9101 / MAFF 303099) (Mesorhizobium loti (strain MAFF 303099)), this protein is 3-dehydroquinate synthase.